The following is a 538-amino-acid chain: Tryptophan 7-halogenase PrnA (538 aa).

FAD-binding residues include Gly-13, Thr-15, Ala-16, Ser-39, Ile-42, Ile-45, Glu-49, and Ala-50. The active site involves Lys-79. Position 79 (Lys-79) interacts with 7-chloro-L-tryptophan. FAD-binding residues include Val-187 and Leu-337. Glu-346 provides a ligand contact to 7-chloro-L-tryptophan. An L-tryptophan-binding site is contributed by Glu-346. Chloride-binding residues include Thr-348 and Gly-349. An FAD-binding site is contributed by Ile-350. The 7-chloro-L-tryptophan site is built by Tyr-443, Tyr-444, Glu-450, and Phe-454. 4 residues coordinate L-tryptophan: Tyr-443, Tyr-444, Glu-450, and Phe-454.

The protein belongs to the flavin-dependent halogenase family. Bacterial tryptophan halogenase subfamily. In terms of assembly, homodimer.

It carries out the reaction L-tryptophan + FADH2 + chloride + O2 = 7-chloro-L-tryptophan + FAD + 2 H2O. It functions in the pathway antibiotic biosynthesis. Its function is as follows. Involved in the biosynthesis of the antifungal antibiotic pyrrolnitrin. Catalyzes the chlorination of tryptophan (Trp) at C7 position to yield 7-chloro-L-tryptophan (7-CLT). The polypeptide is Tryptophan 7-halogenase PrnA (Pseudomonas fluorescens).